The following is a 1363-amino-acid chain: Homeobox protein 13 (1363 aa).

Positions 15-73 (FVMEQIQQQQQQQQQQQQQQQQQQQQQQQQQQQQLQQQQQQQQQQQQQQQQQQQQQQQN) form a coiled coil. Disordered regions lie at residues 66 to 96 (QQQQ…STVP), 120 to 177 (SQHA…INGS), 308 to 437 (INGT…YHGG), 621 to 731 (LNSP…QHQQ), 765 to 818 (HHHH…PQHS), 857 to 911 (SINS…SNSI), 1001 to 1137 (QNYN…TLIN), 1166 to 1202 (NFIN…KRMR), and 1270 to 1341 (ISFG…TLIS). Residues 73 to 96 (NPKMNNQPNETRLPSPPLLNSTVP) are compositionally biased toward polar residues. The span at 132–147 (SLNSSNNNNNNNFNNS) shows a compositional bias: low complexity. Polar residues predominate over residues 148 to 158 (RPTFSSCSGNS). 2 stretches are compositionally biased toward low complexity: residues 159–177 (NNTT…INGS) and 315–326 (SNHSNNNNNNNN). A compositionally biased stretch (basic residues) spans 327-339 (NHHHHHHHHHQKR). The segment covering 348 to 378 (TNHLTPLPLLHKHTNNNNNINNNNNHNHNNI) has biased composition (low complexity). Residues 379 to 393 (LGSPNQLNRSQDFTS) show a composition bias toward polar residues. Low complexity-rich tracts occupy residues 394 to 408 (KNNN…NNKI), 415 to 426 (NKGSPNQNSSEN), 641 to 693 (NNNS…NNNI), 709 to 731 (HHQQ…QHQQ), and 770 to 793 (QQQQ…SNHN). A coiled-coil region spans residues 738–789 (QQQLQIQYQQQQTHNNNLNQTQQLYYNHHHHQQQQQQQQQQQQHNNNNNNNN). Polar residues-rich tracts occupy residues 794–818 (SVLT…PQHS) and 857–883 (SINS…QKNR). 3 stretches are compositionally biased toward low complexity: residues 889–911 (ILNS…SNSI), 1001–1031 (QNYN…NNNF), and 1045–1063 (NINN…NNNN). Over residues 1064-1078 (KNDKNESEFESKEKL) the composition is skewed to basic and acidic residues. The span at 1081-1095 (PFGSSIPNIVNNEQL) shows a compositional bias: polar residues. 3 stretches are compositionally biased toward low complexity: residues 1096-1116 (SPYS…PQWS), 1123-1137 (TSSS…TLIN), and 1166-1177 (NFINNNSNNNNN). Residues 1179 to 1195 (EIDDDDEDGIDGIEGED) show a composition bias toward acidic residues. Residues 1198 to 1261 (KKRMRKTTRP…NRRTKDKLKN (64 aa)) constitute a DNA-binding region (homeobox). Residues 1275–1294 (SSTSSTQTSTNSPSSQLSPL) show a composition bias toward low complexity. Over residues 1297 to 1316 (NMNNNDQQSISTPSLILSQI) the composition is skewed to polar residues. The segment covering 1317-1334 (NNNQNNNQNNNNNNNTNN) has biased composition (low complexity).

It is found in the nucleus. Functionally, putative transcription factor. In Dictyostelium discoideum (Social amoeba), this protein is Homeobox protein 13 (hbx13).